We begin with the raw amino-acid sequence, 348 residues long: 4-hydroxy-2-oxovalerate aldolase 1 (348 aa).

Positions 8 to 260 (ITVHDMTLRD…QTGVDVWAIQ (253 aa)) constitute a Pyruvate carboxyltransferase domain. Residue 16 to 17 (RD) participates in substrate binding. Aspartate 17 lines the Mn(2+) pocket. Histidine 20 serves as the catalytic Proton acceptor. Substrate-binding residues include serine 170 and histidine 199. 2 residues coordinate Mn(2+): histidine 199 and histidine 201. A substrate-binding site is contributed by tyrosine 290.

The protein belongs to the 4-hydroxy-2-oxovalerate aldolase family.

The enzyme catalyses (S)-4-hydroxy-2-oxopentanoate = acetaldehyde + pyruvate. The polypeptide is 4-hydroxy-2-oxovalerate aldolase 1 (Cupriavidus metallidurans (strain ATCC 43123 / DSM 2839 / NBRC 102507 / CH34) (Ralstonia metallidurans)).